Consider the following 178-residue polypeptide: MLEGVIRESITKANAKALKKDGYLIANVYGKGVENVNGAFKLNPFIKYLKEKKHLIFPVKLGDKTFEVVVQEYQKNPVTNELIHVDLLAVTKGVKSKFKVPVKHQGTPVGLKNKGILMLSKKRISVECAPEHLPDHYLVDVTPLDVNESILVRDLEKHENVKILDHDSIAVIGVIKAK.

It belongs to the bacterial ribosomal protein bL25 family. CTC subfamily. As to quaternary structure, part of the 50S ribosomal subunit; part of the 5S rRNA/L5/L18/L25 subcomplex. Contacts the 5S rRNA. Binds to the 5S rRNA independently of L5 and L18.

Functionally, this is one of the proteins that binds to the 5S RNA in the ribosome where it forms part of the central protuberance. The polypeptide is Large ribosomal subunit protein bL25 (Helicobacter pylori (strain Shi470)).